The following is a 477-amino-acid chain: Peptidyl-prolyl cis-trans isomerase FKBP53 (477 aa).

Disordered regions lie at residues 104–135 (DYEH…EDEQ) and 153–366 (AAAP…QVRT). The segment covering 264-274 (KSKKKKNQKEK) has biased composition (basic residues). Residues 299–321 (ISQISSNTKAQDGTANNAMSESS) show a composition bias toward polar residues. A compositionally biased stretch (basic and acidic residues) spans 322–331 (KTPDKSAEKK). The span at 351 to 366 (VEKQTPADSKSSQVRT) shows a compositional bias: polar residues. A PPIase FKBP-type domain is found at 389–477 (GKTVSVRYIG…TFDVELINVQ (89 aa)).

Belongs to the FKBP-type PPIase family. Interacts with histone H3. In terms of tissue distribution, broadly expressed in leaves, flowers, stems and roots. Detected in root apical meristem region and pollen.

The protein resides in the nucleus. It catalyses the reaction [protein]-peptidylproline (omega=180) = [protein]-peptidylproline (omega=0). Functionally, PPIases accelerate the folding of proteins. It catalyzes the cis-trans isomerization of proline imidic peptide bonds in oligopeptides. Histone chaperone possibly involved in H3/H4 deposition to the nucleosome. Associates with 18S rDNA chromatin and negatively regulates the level of its expression. This Arabidopsis thaliana (Mouse-ear cress) protein is Peptidyl-prolyl cis-trans isomerase FKBP53 (FKBP53).